The sequence spans 212 residues: Claudin-7-A (212 aa).

Residues 1 to 7 lie on the Cytoplasmic side of the membrane; that stretch reads MANSGVQ. A helical transmembrane segment spans residues 8–28; sequence LLGFGLSLIGIIGLIVGTILP. Topologically, residues 29-81 are extracellular; sequence QWKMSAYVGDSIITAVATYQGLWMSCAFQSTGQLQCKIYDSILQLDSDLQATR. Residues 82–102 form a helical membrane-spanning segment; it reads ALMIVGIIVSIAGLGVASIGM. Over 103–119 the chain is Cytoplasmic; it reads KCTTCGADDKVRKTRTA. Residues 120–140 form a helical membrane-spanning segment; it reads MTGGIILLVGALCAVVACSWF. The Extracellular segment spans residues 141–162; the sequence is AHNVIRAFYNPFTPVNTKFEFG. The chain crosses the membrane as a helical span at residues 163–183; sequence AAIFIAWGGSFLDVLGGAMLA. At 184 to 212 the chain is on the cytoplasmic side; the sequence is ASCPRSKQVSKYPKSNSTRSANGSNKEYV. The disordered stretch occupies residues 191-212; that stretch reads QVSKYPKSNSTRSANGSNKEYV.

This sequence belongs to the claudin family.

It localises to the cell junction. It is found in the tight junction. Its subcellular location is the cell membrane. In terms of biological role, plays a major role in tight junction-specific obliteration of the intercellular space. The polypeptide is Claudin-7-A (Danio rerio (Zebrafish)).